Reading from the N-terminus, the 175-residue chain is Interferon a3 (175 aa).

The signal sequence occupies residues 1–23; the sequence is MYTMQSWSCIFLIICSMQSVCHC. An intrachain disulfide couples cysteine 24 to cysteine 120.

It belongs to the alpha/beta interferon family. In terms of tissue distribution, isoform 1 and isoform 2 are expressed in several tissues, including gill, spleen, intestine, kidney and skin.

The protein localises to the secreted. It localises to the cytoplasm. It is found in the cytosol. Functionally, key player in antiviral response. Induces expression of TLRs, including that of TLR3, TLR9 and TLR8a1, and that of cytosolic pattern recognition receptors, including RIGI, IFIH1/MDA5 and DHX58/LGP2. Also induces MX1 and its own expression. In the presence of intracellular IFNAR2 (iIFNAR2) and IFNAR1B, intracellular isoform 3 may mediate STAT1 and STAT2 phosphorylation and induction of EIF2AK2, MX1 and RSAD2. The sequence is that of Interferon a3 from Oncorhynchus mykiss (Rainbow trout).